A 429-amino-acid polypeptide reads, in one-letter code: Adenylosuccinate synthetase (429 aa).

GTP contacts are provided by residues 12–18 and 40–42; these read GDEGKGK and GHT. Asp-13 acts as the Proton acceptor in catalysis. Residues Asp-13 and Gly-40 each coordinate Mg(2+). IMP-binding positions include 13–16, 38–41, Thr-129, Arg-143, Gln-223, Thr-238, and Arg-302; these read DEGK and NAGH. His-41 (proton donor) is an active-site residue. 298 to 304 provides a ligand contact to substrate; the sequence is VVTGRKR. GTP contacts are provided by residues Arg-304, 330 to 332, and 412 to 414; these read KLD and STS.

This sequence belongs to the adenylosuccinate synthetase family. Homodimer. Mg(2+) is required as a cofactor.

It is found in the cytoplasm. The enzyme catalyses IMP + L-aspartate + GTP = N(6)-(1,2-dicarboxyethyl)-AMP + GDP + phosphate + 2 H(+). The protein operates within purine metabolism; AMP biosynthesis via de novo pathway; AMP from IMP: step 1/2. Functionally, plays an important role in the de novo pathway of purine nucleotide biosynthesis. Catalyzes the first committed step in the biosynthesis of AMP from IMP. This chain is Adenylosuccinate synthetase, found in Brucella ovis (strain ATCC 25840 / 63/290 / NCTC 10512).